Consider the following 232-residue polypeptide: Phosphatidylserine decarboxylase proenzyme (232 aa).

Ser-190 functions as the Schiff-base intermediate with substrate; via pyruvic acid in the catalytic mechanism. Ser-190 is modified (pyruvic acid (Ser); by autocatalysis).

Belongs to the phosphatidylserine decarboxylase family. PSD-A subfamily. As to quaternary structure, heterodimer of a large membrane-associated beta subunit and a small pyruvoyl-containing alpha subunit. Pyruvate serves as cofactor. Is synthesized initially as an inactive proenzyme. Formation of the active enzyme involves a self-maturation process in which the active site pyruvoyl group is generated from an internal serine residue via an autocatalytic post-translational modification. Two non-identical subunits are generated from the proenzyme in this reaction, and the pyruvate is formed at the N-terminus of the alpha chain, which is derived from the carboxyl end of the proenzyme. The post-translation cleavage follows an unusual pathway, termed non-hydrolytic serinolysis, in which the side chain hydroxyl group of the serine supplies its oxygen atom to form the C-terminus of the beta chain, while the remainder of the serine residue undergoes an oxidative deamination to produce ammonia and the pyruvoyl prosthetic group on the alpha chain.

It is found in the cell membrane. The enzyme catalyses a 1,2-diacyl-sn-glycero-3-phospho-L-serine + H(+) = a 1,2-diacyl-sn-glycero-3-phosphoethanolamine + CO2. The protein operates within phospholipid metabolism; phosphatidylethanolamine biosynthesis; phosphatidylethanolamine from CDP-diacylglycerol: step 2/2. Catalyzes the formation of phosphatidylethanolamine (PtdEtn) from phosphatidylserine (PtdSer). The protein is Phosphatidylserine decarboxylase proenzyme of Rhizobium johnstonii (strain DSM 114642 / LMG 32736 / 3841) (Rhizobium leguminosarum bv. viciae).